Reading from the N-terminus, the 585-residue chain is Protein DENND6B (585 aa).

The 172-residue stretch at 43–214 (ECVCVVTFDL…LPVMGVVVQV (172 aa)) folds into the uDENN domain. The region spanning 246-373 (VHELDLFRCF…VKLKKPSRLK (128 aa)) is the cDENN domain. Positions 375-499 (LDTKPGLYTA…KSPHFDGWYR (125 aa)) constitute a dDENN domain.

It belongs to the DENND6 family.

The protein localises to the recycling endosome. The protein resides in the cytoplasm. Its function is as follows. Guanine nucleotide exchange factor (GEF) for RAB14. Also has some, lesser GEF activity towards RAB35. The chain is Protein DENND6B (DENND6B) from Homo sapiens (Human).